A 141-amino-acid chain; its full sequence is Large ribosomal subunit protein uL11 (141 aa).

Belongs to the universal ribosomal protein uL11 family. As to quaternary structure, part of the ribosomal stalk of the 50S ribosomal subunit. Interacts with L10 and the large rRNA to form the base of the stalk. L10 forms an elongated spine to which L12 dimers bind in a sequential fashion forming a multimeric L10(L12)X complex. One or more lysine residues are methylated.

Its function is as follows. Forms part of the ribosomal stalk which helps the ribosome interact with GTP-bound translation factors. The polypeptide is Large ribosomal subunit protein uL11 (Chlamydia felis (strain Fe/C-56) (Chlamydophila felis)).